Here is a 521-residue protein sequence, read N- to C-terminus: Phospholipase C B (521 aa).

Positions 1–39 form a signal peptide, tat-type signal; sequence MGSEHPVDGMTRRQFFAKAAAATTAGAFMSLAGPIIEKA. Positions 501-521 are disordered; it reads FPQSMPTQETAPTRGIPSGLC.

The protein belongs to the bacterial phospholipase C family. Post-translationally, predicted to be exported by the Tat system. The position of the signal peptide cleavage has not been experimentally proven.

The protein resides in the secreted. Its subcellular location is the cell wall. The enzyme catalyses a 1,2-diacyl-sn-glycero-3-phosphocholine + H2O = phosphocholine + a 1,2-diacyl-sn-glycerol + H(+). In terms of biological role, involved in virulence. Induces cytotoxic effects on mouse macrophage cell lines, via direct or indirect enzymatic hydrolysis of cell membrane phospholipids. Hydrolyzes phosphatidylcholine. The chain is Phospholipase C B from Mycobacterium tuberculosis (strain CDC 1551 / Oshkosh).